Here is a 623-residue protein sequence, read N- to C-terminus: Chaperone protein HtpG (623 aa).

The a; substrate-binding stretch occupies residues 1–330; that stretch reads MIMTQEKKKF…SEDLPLNISR (330 aa). The interval 331-546 is b; the sequence is ESLQHNSVLE…DAAMDIRMER (216 aa). Residues 477-497 are disordered; sequence SDIDVEQTTSQSEEKNTDSKK. Residues 488-497 show a composition bias toward basic and acidic residues; it reads SEEKNTDSKK. Positions 547–623 are c; that stretch reads FLIEQKQIAN…LNDIVQKAIL (77 aa).

Belongs to the heat shock protein 90 family. Homodimer.

The protein resides in the cytoplasm. In terms of biological role, molecular chaperone. Has ATPase activity. The sequence is that of Chaperone protein HtpG from Rickettsia massiliae (strain Mtu5).